Consider the following 339-residue polypeptide: Ketol-acid reductoisomerase (NADP(+)) (339 aa).

The KARI N-terminal Rossmann domain maps to 1 to 182; that stretch reads MRVYYDRDAD…GGGRAGIIET (182 aa). Residues 24-27, R48, S51, T53, and 83-86 each bind NADP(+); these read YGSQ and DELQ. The active site involves H108. G134 lines the NADP(+) pocket. The KARI C-terminal knotted domain maps to 183–328; it reads TFREECETDL…ARLREMMPWI (146 aa). Mg(2+) is bound by residues D191, E195, E227, and E231. S252 contributes to the substrate binding site.

Belongs to the ketol-acid reductoisomerase family. Mg(2+) is required as a cofactor.

The enzyme catalyses (2R)-2,3-dihydroxy-3-methylbutanoate + NADP(+) = (2S)-2-acetolactate + NADPH + H(+). The catalysed reaction is (2R,3R)-2,3-dihydroxy-3-methylpentanoate + NADP(+) = (S)-2-ethyl-2-hydroxy-3-oxobutanoate + NADPH + H(+). It participates in amino-acid biosynthesis; L-isoleucine biosynthesis; L-isoleucine from 2-oxobutanoate: step 2/4. The protein operates within amino-acid biosynthesis; L-valine biosynthesis; L-valine from pyruvate: step 2/4. Functionally, involved in the biosynthesis of branched-chain amino acids (BCAA). Catalyzes an alkyl-migration followed by a ketol-acid reduction of (S)-2-acetolactate (S2AL) to yield (R)-2,3-dihydroxy-isovalerate. In the isomerase reaction, S2AL is rearranged via a Mg-dependent methyl migration to produce 3-hydroxy-3-methyl-2-ketobutyrate (HMKB). In the reductase reaction, this 2-ketoacid undergoes a metal-dependent reduction by NADPH to yield (R)-2,3-dihydroxy-isovalerate. This Parvibaculum lavamentivorans (strain DS-1 / DSM 13023 / NCIMB 13966) protein is Ketol-acid reductoisomerase (NADP(+)).